We begin with the raw amino-acid sequence, 174 residues long: UPF0340 protein SE_1711 (174 aa).

It belongs to the UPF0340 family.

In Staphylococcus epidermidis (strain ATCC 12228 / FDA PCI 1200), this protein is UPF0340 protein SE_1711.